We begin with the raw amino-acid sequence, 366 residues long: Cell division protein FtsY homolog, chloroplastic (366 aa).

The N-terminal 40 residues, 1–40 (MATSSAHLSFLAGRISPFSSERIGLFPLRGEFRPRMTRFR), are a transit peptide targeting the chloroplast. Residues 171 to 178 (GVNGGGKT), 254 to 258 (DTSGR), and 318 to 321 (TKLD) contribute to the GTP site.

Belongs to the GTP-binding SRP family. As to quaternary structure, monomer. Interacts with FFC/cpSRP54, a component of the cpSRP complex, composed of a FFC/cpSRP54 monomer and a CAO/cpSRP43 dimer. The complex with FFC/cpSRP54 is formed when both proteins are bound with GTP. Expressed in green tissues. Low levels in roots and seeds.

The protein resides in the plastid. The protein localises to the chloroplast stroma. It localises to the chloroplast thylakoid membrane. Functionally, signal recognition particle receptor protein. Binds GTP specifically. The GTPase activity is inhibited by the N-terminus of the protein until binding to the thylakoid membrane. Activates the GTPase activity of FFC/cpSRP54 when bound to the cpSRP complex. Required for light-harvesting chlorophyll a/b-binding protein (LHCP) integration into thylakoids. Might be also functionally linked to the Sec translocation machinery. This is Cell division protein FtsY homolog, chloroplastic (CPFTSY) from Arabidopsis thaliana (Mouse-ear cress).